A 239-amino-acid polypeptide reads, in one-letter code: Ribosomal RNA small subunit methyltransferase G (239 aa).

S-adenosyl-L-methionine-binding positions include Gly-78, Phe-83, 129-130 (AE), and Arg-148.

It belongs to the methyltransferase superfamily. RNA methyltransferase RsmG family.

It is found in the cytoplasm. Its function is as follows. Specifically methylates the N7 position of a guanine in 16S rRNA. The polypeptide is Ribosomal RNA small subunit methyltransferase G (Clostridium beijerinckii (strain ATCC 51743 / NCIMB 8052) (Clostridium acetobutylicum)).